We begin with the raw amino-acid sequence, 154 residues long: Low molecular weight protein-tyrosine-phosphatase PtpA (154 aa).

Residue Cys-8 is the Nucleophile of the active site. Arg-14 is an active-site residue. Asp-120 serves as the catalytic Proton donor.

It belongs to the low molecular weight phosphotyrosine protein phosphatase family. As to quaternary structure, interacts with host CORO1A. Phosphorylations at Tyr-122 and Tyr-123 are essential for phosphatase activity.

The protein resides in the secreted. The catalysed reaction is O-phospho-L-tyrosyl-[protein] + H2O = L-tyrosyl-[protein] + phosphate. In terms of biological role, secreted tyrosine phosphatase that plays a critical role during infection as a bacterial effector protein that counteracts host defenses. Required for intramacrophage survival. The sequence is that of Low molecular weight protein-tyrosine-phosphatase PtpA (ptpA) from Staphylococcus aureus (strain bovine RF122 / ET3-1).